The chain runs to 63 residues: Large ribosomal subunit protein bL28 (63 aa).

This sequence belongs to the bacterial ribosomal protein bL28 family.

This Alkaliphilus oremlandii (strain OhILAs) (Clostridium oremlandii (strain OhILAs)) protein is Large ribosomal subunit protein bL28.